Consider the following 203-residue polypeptide: Peptidyl-prolyl cis-trans isomerase FKBP11 (203 aa).

Residues 1–29 form the signal peptide; that stretch reads MTLRPSLLPLRLLLLLLLLLRGAVCQAEA. A PPIase FKBP-type domain is found at 59 to 146; sequence GDTLHIHYSG…HFDVELIALI (88 aa). A helical membrane pass occupies residues 158-178; that stretch reads ILPLVGMAMVPALLGLIGYHL.

It belongs to the FKBP-type PPIase family. Interacts with IFITM5.

It is found in the membrane. It catalyses the reaction [protein]-peptidylproline (omega=180) = [protein]-peptidylproline (omega=0). In terms of biological role, PPIases accelerate the folding of proteins during protein synthesis. This chain is Peptidyl-prolyl cis-trans isomerase FKBP11 (FKBP11), found in Bos taurus (Bovine).